The chain runs to 451 residues: UDP-glycosyltransferase 13 (451 aa).

Histidine 15 acts as the Proton acceptor in catalysis. Histidine 15 lines the an anthocyanidin pocket. Aspartate 93 functions as the Charge relay in the catalytic mechanism. Residues alanine 326, glutamine 328, histidine 343, tryptophan 346, asparagine 347, serine 348, and glutamate 351 each contribute to the UDP-alpha-D-glucose site. Alanine 366 is an an anthocyanidin binding site. 2 residues coordinate UDP-alpha-D-glucose: glutamate 367 and glutamine 368.

The protein belongs to the UDP-glycosyltransferase family. As to expression, expressed in roots. Detected in stems and leaves.

It carries out the reaction a 7-hydroxyisoflavone + UDP-alpha-D-glucose = a 7-hydroxyisoflavone 7-O-beta-D-glucoside + UDP + H(+). Functionally, isoflavone 7-O-glucosyltransferase converting daidzein to daidzin, genistein to genistin and formononetin to ononin. Shows some activity toward the flavanones liquiritigenin and naringenin, but not toward cyanidin, isoliquiritigenin, apigenin, luteolin, kaempferol, quercetin, daidzin and puerarin. In Pueraria montana var. lobata (Kudzu vine), this protein is UDP-glycosyltransferase 13.